Reading from the N-terminus, the 209-residue chain is Ribosome maturation factor RimM (209 aa).

The tract at residues 1-28 is disordered; the sequence is MARRPQRPAPSGRAGAGRGAAGAAPPGP. The region spanning 123–197 is the PRC barrel domain; it reads EDEFFTADLV…RVTIAPPEDL (75 aa).

This sequence belongs to the RimM family. Binds ribosomal protein uS19.

The protein localises to the cytoplasm. Functionally, an accessory protein needed during the final step in the assembly of 30S ribosomal subunit, possibly for assembly of the head region. Essential for efficient processing of 16S rRNA. May be needed both before and after RbfA during the maturation of 16S rRNA. It has affinity for free ribosomal 30S subunits but not for 70S ribosomes. This is Ribosome maturation factor RimM from Methylobacterium sp. (strain 4-46).